Consider the following 747-residue polypeptide: Cysteine--tRNA ligase, cytoplasmic (747 aa).

Positions 1-25 (MTDSWERGKGRRTQPPWSAPNTQAQ) are disordered. Residues 15–25 (PPWSAPNTQAQ) show a composition bias toward polar residues. Residue Cys-54 participates in Zn(2+) binding. Gly-55 contacts L-cysteine. The short motif at 56–66 (PTVYDASHMGH) is the 'HIGH' region element. Thr-95 lines the L-cysteine pocket. The short motif at 100–103 (KIIK) is the 'KIIK' region element. The Zn(2+) site is built by Cys-347, His-372, and Glu-376. Residue His-372 coordinates L-cysteine. Residues 405–409 (KMSKS) carry the 'KMSKS' region motif. Residue Lys-408 coordinates ATP. Positions 651–683 (EEKRKAEEEKQRKKEEAARKKQQQEAAKLEKMK) are enriched in basic and acidic residues. The disordered stretch occupies residues 651–722 (EEKRKAEEEK…KELSKGQSKK (72 aa)).

This sequence belongs to the class-I aminoacyl-tRNA synthetase family. In terms of assembly, homodimer. It depends on Zn(2+) as a cofactor.

Its subcellular location is the cytoplasm. It catalyses the reaction tRNA(Cys) + L-cysteine + ATP = L-cysteinyl-tRNA(Cys) + AMP + diphosphate. In terms of biological role, catalyzes the ATP-dependent ligation of cysteine to tRNA(Cys). The polypeptide is Cysteine--tRNA ligase, cytoplasmic (cars1) (Xenopus tropicalis (Western clawed frog)).